The primary structure comprises 999 residues: Probable basic-leucine zipper transcription factor N (999 aa).

Low complexity-rich tracts occupy residues 1–79 and 88–126; these read MYQS…YQQQ and NNVN…INNN. Residues 1-126 are disordered; sequence MYQSIPQQGN…NNNNGNINNN (126 aa). Coiled-coil stretches lie at residues 148-198 and 232-282; these read QQQQ…MVLM and GIQQ…QQIS. Residues 286-302 show a composition bias toward polar residues; sequence ESASPYYSTPIQSNTML. 3 disordered regions span residues 286–406, 450–533, and 601–620; these read ESAS…SQDQ, QQLH…PTIN, and EKQK…NYRQ. A compositionally biased stretch (low complexity) spans 303–347; sequence SIPSSPGIPSSIPQLNNSNNINNNSNNNNNNNNNNNNNNINYNSN. Polar residues predominate over residues 348 to 406; it reads MASNFISQHSNNGSNTSSPVPQTTYLQNSGGNFNAYNGSNTNSPITPSSYLQPTTSQDQ. Positions 423-451 form a coiled coil; it reads IQQQQKILQQQQQQQLLLQQQIQQQQQQQ. A compositionally biased stretch (low complexity) spans 450 to 517; that stretch reads QQLHQPQSPQ…IIQPTTIQPQ (68 aa). The bZIP domain occupies 601 to 664; the sequence is EKQKTRRRAS…KKLLHENNIL (64 aa). Residues 602-632 are basic motif; sequence KQKTRRRASQNLASRNYRQRKKQYVNEVEDR. The interval 636–643 is leucine-zipper; it reads IVQENERL. Disordered regions lie at residues 665–711, 779–807, and 870–899; these read KSGG…VVET, QSCP…SPYE, and VNNG…TTTT. The segment covering 682–692 has biased composition (acidic residues); sequence SEDEDEDDFDQ. Positions 921-950 form a coiled coil; that stretch reads HLVQLSGLLDKLKENIDHENETLIQTYEKL.

Belongs to the bZIP family.

The protein localises to the nucleus. Its function is as follows. Probable transcriptional regulator. The polypeptide is Probable basic-leucine zipper transcription factor N (bzpN) (Dictyostelium discoideum (Social amoeba)).